We begin with the raw amino-acid sequence, 37 residues long: Cytochrome b6-f complex subunit 7 (37 aa).

Residues 11 to 29 (AVLLMVLVLVGLAWGFLLL) form a helical membrane-spanning segment.

Belongs to the PetM family. The 4 large subunits of the cytochrome b6-f complex are cytochrome b6, subunit IV (17 kDa polypeptide, PetD), cytochrome f and the Rieske protein, while the 4 small subunits are PetG, PetL, PetM and PetN. The complex functions as a dimer.

The protein resides in the cellular thylakoid membrane. Its function is as follows. Component of the cytochrome b6-f complex, which mediates electron transfer between photosystem II (PSII) and photosystem I (PSI), cyclic electron flow around PSI, and state transitions. This chain is Cytochrome b6-f complex subunit 7, found in Rippkaea orientalis (strain PCC 8801 / RF-1) (Cyanothece sp. (strain PCC 8801)).